Here is a 143-residue protein sequence, read N- to C-terminus: Transcriptional regulator MraZ (143 aa).

2 consecutive SpoVT-AbrB domains span residues 5–47 (QYEH…SLEE) and 76–119 (AVEC…SKEV).

Belongs to the MraZ family. In terms of assembly, forms oligomers.

Its subcellular location is the cytoplasm. It localises to the nucleoid. In Thermoanaerobacter sp. (strain X514), this protein is Transcriptional regulator MraZ.